A 389-amino-acid chain; its full sequence is Globin-like protein 6 (389 aa).

Residues 1-15 (MGNQSTKSTHGTTRV) are compositionally biased toward polar residues. Disordered stretches follow at residues 1-38 (MGNQSTKSTHGTTRVSHSKSAHHNSSRVTSDVIPRSAS), 96-123 (RTSKQSPLATGCPRQNLGSPGNRRSVDS), and 143-185 (TVSS…SSNP). Residues 16 to 25 (SHSKSAHHNS) show a composition bias toward basic residues. One can recognise a Globin domain in the interval 196–347 (HLTQPQILFV…VTEQLKEGFQ (152 aa)). Heme b is bound by residues histidine 254 and histidine 286. Positions 367–389 (SSFEISTKTKQSDMKRFHTLDNM) are disordered. A compositionally biased stretch (basic and acidic residues) spans 376 to 389 (KQSDMKRFHTLDNM).

It belongs to the globin family. In terms of tissue distribution, expressed in the head and tail neurons and nerve cord.

In terms of biological role, may play a role as physiological sensor for oxygen via redox signaling and/or electron transport. This Caenorhabditis elegans protein is Globin-like protein 6.